A 291-amino-acid chain; its full sequence is Protein ILRUN (291 aa).

The interval Asn-199 to Ser-291 is disordered. The span at Pro-212–Thr-228 shows a compositional bias: polar residues. Residues Ser-215, Ser-222, and Ser-265 each carry the phosphoserine modification. The segment covering Leu-257 to Val-276 has biased composition (low complexity).

Interacts with IRF3; the interaction inhibits IRF3 binding to its DNA consensus sequence.

The protein localises to the cytoplasm. The protein resides in the nucleus. In terms of biological role, negative regulator of innate antiviral response. Blocks IRF3-dependent cytokine production such as IFNA, IFNB and TNF. Interacts with IRF3 and inhibits IRF3 recruitment to type I IFN promoter sequences while also reducing nuclear levels of the coactivators EP300 and CREBBP. The sequence is that of Protein ILRUN from Mus musculus (Mouse).